We begin with the raw amino-acid sequence, 767 residues long: MSLGRLLRRASSKASDLLTLTPGGSGSGSPSVLDGEIIYSKNNVCVHPPEGLQGLGEHHPGYLCLYMEKDEMLGATLILAWVPNSRIQRQDEEALRYITPESSPVRKAPRPRGRRTRSSGASHQPSPTELRPTLTPKDEDILVVAQSVPDRMLASPAPEDEEKLAQGLGVDGAQPASQPACSPSGILSTVSPQDVTEEGREPRPEAGEEDGSLELSAEGVSRDSSFDSDSDTFSSPFCLSPISAALAESRGSVFLESDSSPPSSSDAGLRFPDSNGLLQTPRWDEPQRVCALEQICGVFRVDLGHMRSLRLFFSDEACTSGQLVVASRESQYKVFHFHHGGLDKLSDVFQQWKYCTEMQLKDQQVAPDKTCMQFSIRRPKLPSSETHPEESMYKRLGVSAWLNHLNELGQVEEEYKLRKAIFFGGIDVSIRGEVWPFLLRYYSHESTSEEREALRLQKRKEYSEIQQKRLSMTPEEHRAFWRNVQFTVDKDVVRTDRNNQFFRGEDNPNVESMRRILLNYAVYNPAVGYSQGMSDLVAPILAEVLDESDTFWCFVGLMQNTIFVSSPRDEDMEKQLLYLRELLRLTHVRFYQHLVSLGEDGLQMLFCHRWLLLCFKREFPEAEALRIWEACWAHYQTDYFHLFICVAIVAIYGDDVIEQQLATDQMLLHFGNLAMHMNGELVLRKARSLLYQFRLLPRIPCSLHDLCKLCGSGMWDSGSMPAVECTGHHPGSESCPYGGTVEMPSPKSLREGKKGPKTPQDGFGFRR.

Disordered stretches follow at residues 93–138 (EALR…TPKD) and 169–228 (GVDG…SFDS). A compositionally biased stretch (basic residues) spans 107–117 (KAPRPRGRRTR). Over residues 175–194 (PASQPACSPSGILSTVSPQD) the composition is skewed to polar residues. Residues 197–206 (EEGREPRPEA) are compositionally biased toward basic and acidic residues. The Rab-GAP TBC domain occupies 425 to 635 (GIDVSIRGEV…RIWEACWAHY (211 aa)). The segment at 729–767 (HPGSESCPYGGTVEMPSPKSLREGKKGPKTPQDGFGFRR) is disordered.

Its function is as follows. May act as a GTPase-activating protein for Rab family protein(s). This chain is TBC1 domain family member 16 (TBC1D16), found in Homo sapiens (Human).